We begin with the raw amino-acid sequence, 382 residues long: RIB43A-like with coiled-coils protein 2 (382 aa).

Positions 222-255 (NKSQAIESVERKKQEKKQEQEDNLAEITNLLRGD) form a coiled coil.

Belongs to the RIB43A family. Microtubule inner protein component of sperm flagellar doublet microtubules. In terms of tissue distribution, expressed in airway epithelial cells.

The protein localises to the cytoplasm. It localises to the cytoskeleton. The protein resides in the cilium axoneme. Its subcellular location is the flagellum axoneme. Functionally, microtubule inner protein (MIP) part of the dynein-decorated doublet microtubules (DMTs) in cilia axoneme, which is required for motile cilia beating. The chain is RIB43A-like with coiled-coils protein 2 from Homo sapiens (Human).